The sequence spans 128 residues: Ribonuclease P protein component (128 aa).

This sequence belongs to the RnpA family. Consists of a catalytic RNA component (M1 or rnpB) and a protein subunit.

The enzyme catalyses Endonucleolytic cleavage of RNA, removing 5'-extranucleotides from tRNA precursor.. Functionally, RNaseP catalyzes the removal of the 5'-leader sequence from pre-tRNA to produce the mature 5'-terminus. It can also cleave other RNA substrates such as 4.5S RNA. The protein component plays an auxiliary but essential role in vivo by binding to the 5'-leader sequence and broadening the substrate specificity of the ribozyme. The chain is Ribonuclease P protein component from Prochlorococcus marinus (strain NATL2A).